The chain runs to 719 residues: Phosphoribosylformylglycinamidine synthase subunit PurL (719 aa).

Histidine 47 is a catalytic residue. ATP-binding residues include tyrosine 50 and lysine 89. Glutamate 91 is a Mg(2+) binding site. Substrate-binding positions include serine 92 to histidine 95 and arginine 114. Residue histidine 93 is the Proton acceptor of the active site. Aspartate 115 lines the Mg(2+) pocket. Position 238 (glutamine 238) interacts with substrate. Aspartate 266 is a binding site for Mg(2+). Glutamate 310–glutamine 312 contributes to the substrate binding site. Residues aspartate 488 and glycine 525 each coordinate ATP. Mg(2+) is bound at residue asparagine 526. Serine 528 is a substrate binding site.

The protein belongs to the FGAMS family. In terms of assembly, monomer. Part of the FGAM synthase complex composed of 1 PurL, 1 PurQ and 2 PurS subunits.

The protein resides in the cytoplasm. The catalysed reaction is N(2)-formyl-N(1)-(5-phospho-beta-D-ribosyl)glycinamide + L-glutamine + ATP + H2O = 2-formamido-N(1)-(5-O-phospho-beta-D-ribosyl)acetamidine + L-glutamate + ADP + phosphate + H(+). It participates in purine metabolism; IMP biosynthesis via de novo pathway; 5-amino-1-(5-phospho-D-ribosyl)imidazole from N(2)-formyl-N(1)-(5-phospho-D-ribosyl)glycinamide: step 1/2. Part of the phosphoribosylformylglycinamidine synthase complex involved in the purines biosynthetic pathway. Catalyzes the ATP-dependent conversion of formylglycinamide ribonucleotide (FGAR) and glutamine to yield formylglycinamidine ribonucleotide (FGAM) and glutamate. The FGAM synthase complex is composed of three subunits. PurQ produces an ammonia molecule by converting glutamine to glutamate. PurL transfers the ammonia molecule to FGAR to form FGAM in an ATP-dependent manner. PurS interacts with PurQ and PurL and is thought to assist in the transfer of the ammonia molecule from PurQ to PurL. This chain is Phosphoribosylformylglycinamidine synthase subunit PurL, found in Jannaschia sp. (strain CCS1).